Reading from the N-terminus, the 1225-residue chain is Clustered mitochondria protein homolog (1225 aa).

Residues 1–22 form a disordered region; sequence MAQTNGEMEHSKESPEQITNGN. Residues 281–532 form the Clu domain; that stretch reads QESNNQKDLL…RVTPLDVAWN (252 aa). Disordered stretches follow at residues 577 to 605 and 846 to 878; these read EEAA…EALD and ANGV…SAAA. 3 TPR repeats span residues 949–982, 991–1024, and 1033–1066; these read AKLY…TERT, ILSY…WKII, and ITTM…CESL. Over residues 1153–1184 the composition is skewed to polar residues; it reads RTTLGTQIQPQVGQSTADVSAPSQASNSSIDS. Residues 1153–1225 form a disordered region; it reads RTTLGTQIQP…KLRGSKKSSA (73 aa).

The protein belongs to the CLU family. As to quaternary structure, may associate with the eukaryotic translation initiation factor 3 (eIF-3) complex.

Its subcellular location is the cytoplasm. In terms of biological role, mRNA-binding protein involved in proper cytoplasmic distribution of mitochondria. In Emericella nidulans (strain FGSC A4 / ATCC 38163 / CBS 112.46 / NRRL 194 / M139) (Aspergillus nidulans), this protein is Clustered mitochondria protein homolog.